Consider the following 257-residue polypeptide: Outer membrane protein Omp26La (257 aa).

Residues Met-1–Ala-19 form the signal peptide.

This sequence belongs to the MipA/OmpV family.

The protein localises to the cell outer membrane. The sequence is that of Outer membrane protein Omp26La from Vibrio anguillarum (Listonella anguillarum).